Consider the following 298-residue polypeptide: Acetylglutamate kinase (298 aa).

Substrate-binding positions include G69–G70, R91, and N196.

Belongs to the acetylglutamate kinase family. ArgB subfamily.

The protein localises to the cytoplasm. The enzyme catalyses N-acetyl-L-glutamate + ATP = N-acetyl-L-glutamyl 5-phosphate + ADP. It functions in the pathway amino-acid biosynthesis; L-arginine biosynthesis; N(2)-acetyl-L-ornithine from L-glutamate: step 2/4. In terms of biological role, catalyzes the ATP-dependent phosphorylation of N-acetyl-L-glutamate. In Rhodopseudomonas palustris (strain BisA53), this protein is Acetylglutamate kinase.